The sequence spans 85 residues: YcgL domain-containing protein ECA2367 (85 aa).

Residues 1 to 85 (MFCVIYRSVK…PVESLLTTPV (85 aa)) enclose the YcgL domain.

This chain is YcgL domain-containing protein ECA2367, found in Pectobacterium atrosepticum (strain SCRI 1043 / ATCC BAA-672) (Erwinia carotovora subsp. atroseptica).